We begin with the raw amino-acid sequence, 486 residues long: Betaine aldehyde dehydrogenase (486 aa).

Thr23 and Asp90 together coordinate K(+). Position 147–149 (147–149 (GAW)) interacts with NAD(+). Lys159 serves as the catalytic Charge relay system. NAD(+) contacts are provided by residues 173-176 (KPSE) and 226-229 (ESGT). Leu241 is a K(+) binding site. The Proton acceptor role is filled by Glu247. Residues Gly249, Cys281, and Glu382 each contribute to the NAD(+) site. Cys281 acts as the Nucleophile in catalysis. Cys281 is modified (cysteine sulfenic acid (-SOH)). Residues Lys452 and Gly455 each coordinate K(+). Glu459 (charge relay system) is an active-site residue.

This sequence belongs to the aldehyde dehydrogenase family. Dimer of dimers. Requires K(+) as cofactor.

The catalysed reaction is betaine aldehyde + NAD(+) + H2O = glycine betaine + NADH + 2 H(+). The protein operates within amine and polyamine biosynthesis; betaine biosynthesis via choline pathway; betaine from betaine aldehyde: step 1/1. Its function is as follows. Involved in the biosynthesis of the osmoprotectant glycine betaine. Catalyzes the irreversible oxidation of betaine aldehyde to the corresponding acid. The protein is Betaine aldehyde dehydrogenase of Vibrio campbellii (strain ATCC BAA-1116).